The primary structure comprises 171 residues: NADH-quinone oxidoreductase subunit I (171 aa).

2 4Fe-4S ferredoxin-type domains span residues 41–71 and 81–110; these read LTRDPDGEERCVACNLCAAVCPVDCIALQKT and EFFRINFSRCILCGLCEEACPTYAIQLTPD. The [4Fe-4S] cluster site is built by Cys51, Cys54, Cys57, Cys61, Cys90, Cys93, Cys96, and Cys100.

The protein belongs to the complex I 23 kDa subunit family. As to quaternary structure, NDH-1 is composed of 14 different subunits. Subunits NuoA, H, J, K, L, M, N constitute the membrane sector of the complex. The cofactor is [4Fe-4S] cluster.

It localises to the cell inner membrane. The enzyme catalyses a quinone + NADH + 5 H(+)(in) = a quinol + NAD(+) + 4 H(+)(out). In terms of biological role, NDH-1 shuttles electrons from NADH, via FMN and iron-sulfur (Fe-S) centers, to quinones in the respiratory chain. The immediate electron acceptor for the enzyme in this species is believed to be ubiquinone. Couples the redox reaction to proton translocation (for every two electrons transferred, four hydrogen ions are translocated across the cytoplasmic membrane), and thus conserves the redox energy in a proton gradient. This is NADH-quinone oxidoreductase subunit I from Methylococcus capsulatus (strain ATCC 33009 / NCIMB 11132 / Bath).